A 185-amino-acid polypeptide reads, in one-letter code: Cell wall protein phiA (185 aa).

An N-terminal signal peptide occupies residues Met-1–Ala-18. Residue Asn-60 is glycosylated (N-linked (GlcNAc...) asparagine).

It belongs to the phiA family.

The protein resides in the secreted. The protein localises to the cell wall. Functionally, cell wall protein involved in development of asexual structures such as phialide and conidium development, and thus required for spore formation. Plays a role as a general stress protectant produced by the fungus in competition with antagonistic bacteria. In Aspergillus fumigatus (strain CBS 144.89 / FGSC A1163 / CEA10) (Neosartorya fumigata), this protein is Cell wall protein phiA.